Here is a 490-residue protein sequence, read N- to C-terminus: Betaine aldehyde dehydrogenase (490 aa).

K(+) contacts are provided by I27 and D93. Position 150-152 (150-152 (GAW)) interacts with NAD(+). K162 serves as the catalytic Charge relay system. 176–179 (KPSE) is an NAD(+) binding site. V180 provides a ligand contact to K(+). 230–233 (GTTT) provides a ligand contact to NAD(+). L246 is a K(+) binding site. The Proton acceptor role is filled by E252. Residues G254, C286, and E387 each coordinate NAD(+). The Nucleophile role is filled by C286. At C286 the chain carries Cysteine sulfenic acid (-SOH). K(+) contacts are provided by K457 and G460. E464 functions as the Charge relay system in the catalytic mechanism.

This sequence belongs to the aldehyde dehydrogenase family. In terms of assembly, dimer of dimers. Requires K(+) as cofactor.

It carries out the reaction betaine aldehyde + NAD(+) + H2O = glycine betaine + NADH + 2 H(+). Its pathway is amine and polyamine biosynthesis; betaine biosynthesis via choline pathway; betaine from betaine aldehyde: step 1/1. Functionally, involved in the biosynthesis of the osmoprotectant glycine betaine. Catalyzes the irreversible oxidation of betaine aldehyde to the corresponding acid. The polypeptide is Betaine aldehyde dehydrogenase (Pseudomonas putida (strain W619)).